The primary structure comprises 805 residues: Acetyl-CoA decarbonylase/synthase complex subunit alpha 2 (805 aa).

[4Fe-4S] cluster contacts are provided by Cys-72, Cys-75, Cys-76, Cys-78, Cys-83, and Cys-93. His-116 is a CO binding site. The [Ni-4Fe-4S] cluster site is built by His-249, Cys-277, and Cys-322. 4Fe-4S ferredoxin-type domains follow at residues 407 to 435 (EEFK…IPEA) and 445 to 474 (EYLE…LNVL). [4Fe-4S] cluster-binding residues include Cys-416, Cys-419, Cys-422, Cys-426, Cys-454, Cys-457, Cys-460, and Cys-464. [Ni-4Fe-4S] cluster is bound by residues Cys-522, Cys-551, and Cys-586.

This sequence belongs to the Ni-containing carbon monoxide dehydrogenase family. Heterotetramer of two alpha and two epsilon subunits. The ACDS complex is made up of alpha, epsilon, beta, gamma and delta subunits with a probable stoichiometry of (alpha(2)epsilon(2))(4)-beta(8)-(gamma(1)delta(1))(8). Requires [4Fe-4S] cluster as cofactor. [Ni-4Fe-4S] cluster serves as cofactor.

The catalysed reaction is CO + 2 oxidized [2Fe-2S]-[ferredoxin] + H2O = 2 reduced [2Fe-2S]-[ferredoxin] + CO2 + 2 H(+). It functions in the pathway one-carbon metabolism; methanogenesis from acetate. Its function is as follows. Part of the ACDS complex that catalyzes the reversible cleavage of acetyl-CoA, allowing growth on acetate as sole source of carbon and energy. The alpha-epsilon subcomponent functions as a carbon monoxide dehydrogenase. This chain is Acetyl-CoA decarbonylase/synthase complex subunit alpha 2, found in Methanosarcina acetivorans (strain ATCC 35395 / DSM 2834 / JCM 12185 / C2A).